We begin with the raw amino-acid sequence, 520 residues long: Probable E3 ubiquitin-protein ligase XBOS33 (520 aa).

ANK repeat units follow at residues 44–73, 77–106, 111–140, 185–214, and 228–258; these read GLNS…DVNV, CGQT…NVTR, SGRT…PSAP, GGVT…NVSA, and AGST…KLTL. The RING-type zinc-finger motif lies at 327 to 377; it reads CAVCLERSCSVAAEGCCHEFCIKCALYLCSTSNTRVEFTGPPGSIPCPLCR. The segment covering 467 to 479 has biased composition (polar residues); sequence QDGSEVQSPQPSH. A disordered region spans residues 467 to 493; the sequence is QDGSEVQSPQPSHCASMEMDKREQQDL. Residues 484–493 show a composition bias toward basic and acidic residues; that stretch reads EMDKREQQDL.

The enzyme catalyses S-ubiquitinyl-[E2 ubiquitin-conjugating enzyme]-L-cysteine + [acceptor protein]-L-lysine = [E2 ubiquitin-conjugating enzyme]-L-cysteine + N(6)-ubiquitinyl-[acceptor protein]-L-lysine.. Its pathway is protein modification; protein ubiquitination. This chain is Probable E3 ubiquitin-protein ligase XBOS33 (XBOS33), found in Oryza sativa subsp. japonica (Rice).